The following is a 593-amino-acid chain: UvrABC system protein C (593 aa).

Residues 17-94 (MEPGCYLMKD…IKQYQPRYNI (78 aa)) form the GIY-YIG domain. In terms of domain architecture, UVR spans 199 to 234 (KTILKSLEERMLTASESLDFERAKEYRDLIQHIQNL).

Belongs to the UvrC family. In terms of assembly, interacts with UvrB in an incision complex.

It localises to the cytoplasm. The UvrABC repair system catalyzes the recognition and processing of DNA lesions. UvrC both incises the 5' and 3' sides of the lesion. The N-terminal half is responsible for the 3' incision and the C-terminal half is responsible for the 5' incision. This Staphylococcus aureus (strain MRSA252) protein is UvrABC system protein C.